A 354-amino-acid polypeptide reads, in one-letter code: Dihydroorotate dehydrogenase (quinone) (354 aa).

FMN-binding positions include 61–65 (AGYDK) and A85. Residue K65 coordinates substrate. 110-114 (NRFGF) contacts substrate. N139 and N170 together coordinate FMN. N170 lines the substrate pocket. Catalysis depends on S173, which acts as the Nucleophile. Residue N175 participates in substrate binding. Residues K211 and T239 each contribute to the FMN site. 240–241 (NT) is a binding site for substrate. FMN is bound by residues G261, G290, and 311–312 (YT).

This sequence belongs to the dihydroorotate dehydrogenase family. Type 2 subfamily. In terms of assembly, monomer. It depends on FMN as a cofactor.

The protein localises to the cell membrane. It catalyses the reaction (S)-dihydroorotate + a quinone = orotate + a quinol. It participates in pyrimidine metabolism; UMP biosynthesis via de novo pathway; orotate from (S)-dihydroorotate (quinone route): step 1/1. In terms of biological role, catalyzes the conversion of dihydroorotate to orotate with quinone as electron acceptor. This is Dihydroorotate dehydrogenase (quinone) from Cereibacter sphaeroides (strain ATCC 17023 / DSM 158 / JCM 6121 / CCUG 31486 / LMG 2827 / NBRC 12203 / NCIMB 8253 / ATH 2.4.1.) (Rhodobacter sphaeroides).